The chain runs to 533 residues: Ribonuclease III domain-containing protein RNC1, chloroplastic (533 aa).

Residues 1 to 30 (MAPPAMAFQALALGPLPLPLPAARRRRRVR) constitute a chloroplast transit peptide. 2 disordered regions span residues 31–57 (VLAV…NSPS) and 66–85 (RKKA…ILKP). Over residues 39–53 (TPPPPPSPSSPPEPA) the composition is skewed to pro residues. Residues 69 to 82 (AVSPKKKHPPRRFI) show a composition bias toward basic residues. 2 RNase III domains span residues 164–279 (LLYL…LCFG) and 411–511 (EHPR…CVYG).

Interacts with RNA. Part of large ribonucleo-protein particles that contain CAF1 and/or CAF2.

It localises to the plastid. The protein localises to the chloroplast. Functionally, binds specific group II introns in chloroplasts and facilitates their splicing. Acts on both subgroup IIA and subgroup IIB introns. The substrates of the subgroup II also require the CRM domain proteins CAF1 or CAF2. Binds both single-stranded and double-stranded RNA non-specifically, but lacks endonuclease activity. Required for plastid ribosome biogenesis. The protein is Ribonuclease III domain-containing protein RNC1, chloroplastic of Oryza sativa subsp. japonica (Rice).